Here is an 860-residue protein sequence, read N- to C-terminus: DNA mismatch repair protein MutS (860 aa).

An ATP-binding site is contributed by 607–614 (GPNMSGKS).

The protein belongs to the DNA mismatch repair MutS family.

In terms of biological role, this protein is involved in the repair of mismatches in DNA. It is possible that it carries out the mismatch recognition step. This protein has a weak ATPase activity. The protein is DNA mismatch repair protein MutS of Listeria monocytogenes serovar 1/2a (strain ATCC BAA-679 / EGD-e).